A 326-amino-acid polypeptide reads, in one-letter code: Cyclin-dependent kinase 1 (326 aa).

A Protein kinase domain is found at 16–306 (FTKLEKIGEG…SKKALHHPYF (291 aa)). Residues 22-30 (IGEGTYGVV) and lysine 45 each bind ATP. The Proton acceptor role is filled by aspartate 140.

It belongs to the protein kinase superfamily. CMGC Ser/Thr protein kinase family. CDC2/CDKX subfamily. Forms a stable but non-covalent complex with a regulatory subunit and with a cyclin. Interacts with cks-1.

It localises to the nucleus. The protein resides in the cytoplasm. It is found in the cytoskeleton. The protein localises to the microtubule organizing center. Its subcellular location is the centrosome. The enzyme catalyses L-seryl-[protein] + ATP = O-phospho-L-seryl-[protein] + ADP + H(+). The catalysed reaction is L-threonyl-[protein] + ATP = O-phospho-L-threonyl-[protein] + ADP + H(+). It carries out the reaction [DNA-directed RNA polymerase] + ATP = phospho-[DNA-directed RNA polymerase] + ADP + H(+). With respect to regulation, phosphorylation both activates and inactivates the enzyme depending on the site of phosphorylation. Its function is as follows. Plays a key role in the control of the eukaryotic cell cycle. Required for entry into S-phase and mitosis. Acts as a component of the kinase complex that phosphorylates the repetitive C-terminus of RNA polymerase II. May function in concert with npp-16 to arrest prophase blastomeres in response to anoxia. This Caenorhabditis briggsae protein is Cyclin-dependent kinase 1.